The sequence spans 471 residues: MSTTSMILTKKNIIILSIIIITIIAYQFYITSPQSFPSSNTITNTINTSGKGLDYTELLNLQKDLKAQQTEIRKQLEQLKYSINDINQNQNENQNQINNEYNNNKLNDEQENNNNNNYNNNNNNNNNELINYKERIKKKSKEQPNTCIPVEGKLLCLPNFIVIGTMKSGTTFLDYYLQKHPQIAHHSKKEIWYFNSYYANGIEWYAKHFEQYTSLENQKLIGEATPFYINNPNTAPRLFTTLKNAKLILLLRDPVERSLSQYHFSIQWLKRNKSPPLEYSFEHLIHEEADVIETCIRGHERYKEAFKQRKEIEKNGGGGLLNDNTSGEEFNLVDPFYTLHSEKNWTFYKDCIRCDKCFQIGSILHTSGHPTFGMLAKSLYFEQLDYWLNFFPLEQIHIIRYEDISSQPESVLSELEDFLDINHIDYGEFKPRNVVQHDPMNQEIKSYLINYFKQSNEKLYNLLNRDFKWQN.

Residues 1–12 lie on the Cytoplasmic side of the membrane; sequence MSTTSMILTKKN. Residues 13-33 form a helical; Signal-anchor for type II membrane protein membrane-spanning segment; that stretch reads IIILSIIIITIIAYQFYITSP. Residues 34–471 are Lumenal-facing; it reads QSFPSSNTIT…LLNRDFKWQN (438 aa). N-linked (GlcNAc...) asparagine glycosylation is present at Asn47. Low complexity-rich tracts occupy residues 89–105 and 112–127; these read NQNE…NNNK and NNNN…NNNN. A disordered region spans residues 89 to 127; it reads NQNENQNQINNEYNNNKLNDEQENNNNNNYNNNNNNNNN. 3'-phosphoadenylyl sulfate-binding positions include 167 to 172, Arg252, and Ser260; that span reads KSGTTF. Asn324 and Asn344 each carry an N-linked (GlcNAc...) asparagine glycan. Residue Tyr348 coordinates 3'-phosphoadenylyl sulfate.

It belongs to the sulfotransferase 1 family.

It localises to the membrane. Sulfotransferase involved in intracellular killing of bacteria. This is Membrane-associated sulfotransferase kil1 (kil1) from Dictyostelium discoideum (Social amoeba).